The primary structure comprises 651 residues: UvrABC system protein C (651 aa).

The 80-residue stretch at 21 to 100 (TEPGCYLMRD…IKNQQPHFNV (80 aa)) folds into the GIY-YIG domain. Residues 210–245 (DELRQLLNQQMERYAERLDFESAARIRDQLQGIDQL) enclose the UVR domain.

This sequence belongs to the UvrC family. As to quaternary structure, interacts with UvrB in an incision complex.

It localises to the cytoplasm. The UvrABC repair system catalyzes the recognition and processing of DNA lesions. UvrC both incises the 5' and 3' sides of the lesion. The N-terminal half is responsible for the 3' incision and the C-terminal half is responsible for the 5' incision. The sequence is that of UvrABC system protein C from Synechococcus sp. (strain CC9311).